We begin with the raw amino-acid sequence, 287 residues long: Large ribosomal subunit protein uL2 (287 aa).

Disordered regions lie at residues 1–30 and 211–287; these read MGIR…DQPE and NRWK…GRQS. Residues 12–22 show a composition bias toward polar residues; that stretch reads GTRQKSVSDFS. 2 stretches are compositionally biased toward basic residues: residues 211 to 220 and 258 to 287; these read NRWKGRRPKV and KTRK…GRQS.

This sequence belongs to the universal ribosomal protein uL2 family. Part of the 50S ribosomal subunit. Forms a bridge to the 30S subunit in the 70S ribosome.

In terms of biological role, one of the primary rRNA binding proteins. Required for association of the 30S and 50S subunits to form the 70S ribosome, for tRNA binding and peptide bond formation. It has been suggested to have peptidyltransferase activity; this is somewhat controversial. Makes several contacts with the 16S rRNA in the 70S ribosome. The polypeptide is Large ribosomal subunit protein uL2 (Cyanothece sp. (strain PCC 7425 / ATCC 29141)).